A 236-amino-acid chain; its full sequence is MRQHVNPLSRFFQLPLQLPSPGELFDHPEQPIHLDIGCARGRCILGLAELNPGWNHLGVEIRRPLVTAADRDALNSGSGNVRVLFCNANISLESWLAALPNDRLQRVSVQFPDPWFKRRHRKRRVLQPALLLAIAAALQPGRELFLQSDVLAVIEPMVALTELSGCFTRPESDARPWRADNPLPVPTEREQYVLEKNLPVYRVLYRRNASPLPDPEALKSRWQELDNPAETVFTDI.

S-adenosyl-L-methionine-binding residues include Asp35, Glu60, Asn87, and Asp113. The active site involves Asp113. Substrate-binding residues include Lys117 and Asp149.

It belongs to the class I-like SAM-binding methyltransferase superfamily. TrmB family.

The enzyme catalyses guanosine(46) in tRNA + S-adenosyl-L-methionine = N(7)-methylguanosine(46) in tRNA + S-adenosyl-L-homocysteine. It participates in tRNA modification; N(7)-methylguanine-tRNA biosynthesis. Its function is as follows. Catalyzes the formation of N(7)-methylguanine at position 46 (m7G46) in tRNA. This Parasynechococcus marenigrum (strain WH8102) protein is tRNA (guanine-N(7)-)-methyltransferase.